The primary structure comprises 527 residues: MIAMIATAIIGIVAGGGLGWALHKFFRARTLRLAREEAQDILDEANEVVELRNLEERERIQEIEMELWTKVEPEMLKSEGRIEDLQEVANERKAKADAIVQEEKKKLQDREADVKVQEQALRGQEAELGKLKEAQKALNQELVQKLTERLGTSAEEFKTQLKNQMEEESRRRAARMIQETEADTKEHAESEAKRILSLVIDRFARPYCAERGIGAVNFPDAHIRKLFCDPAGNNIKAVQDACGCDIIVEEGMEMVGVAGFDPVRRELTRRTLERIFKEKKNINPDFIRKIAENQKKELFKNIKHDGDSLAKELKLEGLNAEIRQMMGSLRYRYSFTQNQYFHCGEVGWLAGLMAAELGIDIKKARRVGMLHDIGKSMDHTVEGGHAVIGADFIAARGEAPDVVHAVKAHHFDEQPSTDHAFLVIAADAVSGARPGARRSTIESYNQKVSELQDIARSFPGVTDCFVLSGGRECRVMVNGKKVDDTQAMDLSRKIAARIEEECNYPGSIKVVVVRETVVTEQTRKELA.

Residues 2–22 form a helical membrane-spanning segment; it reads IAMIATAIIGIVAGGGLGWAL. Residues 339–432 enclose the HD domain; that stretch reads QYFHCGEVGW…VIAADAVSGA (94 aa).

The protein belongs to the RNase Y family.

The protein localises to the cell membrane. Its function is as follows. Endoribonuclease that initiates mRNA decay. This chain is Ribonuclease Y 2, found in Bdellovibrio bacteriovorus (strain ATCC 15356 / DSM 50701 / NCIMB 9529 / HD100).